The sequence spans 437 residues: Vasoactive intestinal polypeptide receptor 2 (437 aa).

The N-terminal stretch at 1–22 (MRASVVLTCYCWLLVRVSSIHP) is a signal peptide. Over 23 to 123 (ECRFHLEIQE…EDESKISFYI (101 aa)) the chain is Extracellular. Intrachain disulfides connect C37–C60, C51–C92, and C74–C108. Residues N57, N87, and N91 are each glycosylated (N-linked (GlcNAc...) asparagine). The helical transmembrane segment at 124 to 149 (LVKAIYTLGYSVSLMSLTTGSIIICL) threads the bilayer. At 150–157 (FRKLHCTR) the chain is on the cytoplasmic side. Residues 158–179 (NYIHLNLFLSFMLRAISVLVKD) form a helical membrane-spanning segment. The Extracellular segment spans residues 180–202 (SVLYSSSGLLRCHDQPASWVGCK). Cysteines 201 and 270 form a disulfide. Residues 203-227 (LSLVFFQYCIMANFYWLLVEGLYLH) form a helical membrane-spanning segment. The Cytoplasmic portion of the chain corresponds to 228–238 (TLLVAILPPSR). A helical transmembrane segment spans residues 239-260 (CFLAYLLIGWGIPSVCIGAWTA). Topologically, residues 261–279 (TRLSLEDTGCWDTNDHSIP) are extracellular. Residues 280 to 303 (WWVIRMPILISIVVNFALFISIVR) traverse the membrane as a helical segment. Over 304–324 (ILLQKLTSPDVGGNDQSQYKR) the chain is Cytoplasmic. Residues 325–345 (LAKSTLLLIPLFGVHYMVFAA) traverse the membrane as a helical segment. Residues 346-353 (FPIGISST) lie on the Extracellular side of the membrane. Residues 354 to 377 (YQILFELCVGSFQGLVVAVLYCFL) traverse the membrane as a helical segment. The Cytoplasmic segment spans residues 378-437 (NSEVQCELKRRWRGLCLTQAGSRDYRLHSWSMSRNGSESALQIHRGSRTQSFLQSETSVI).

Belongs to the G-protein coupled receptor 2 family. As to quaternary structure, interacts with ADCYAP1/PACAP (via N-terminal extracellular domain); activated by PACAP27 and CAPAC38 neuropeptides. Interacts with VIP; the interaction results in VIPR1 activation. Expressed at high levels in the MIN6 cells, at moderate levels in pancreatic islets, insulin-secreting cells, lung, brain, stomach, and colon, and at low levels in the heart.

It is found in the cell membrane. Its function is as follows. G protein-coupled receptor activated by the neuropeptides vasoactive intestinal peptide (VIP) and pituitary adenylate cyclase-activating polypeptide (ADCYAP1/PACAP). Binds VIP and both PACAP27 and PACAP38 bioactive peptides with the order of ligand affinity of VIP = PACAP38 &gt; PACAP27. Ligand binding causes a conformation change that triggers signaling via guanine nucleotide-binding proteins (G proteins) and modulates the activity of downstream effectors. Activates cAMP-dependent pathway. May be coupled to phospholipase C. The chain is Vasoactive intestinal polypeptide receptor 2 from Mus musculus (Mouse).